Here is a 61-residue protein sequence, read N- to C-terminus: UPF0434 protein Bpet2671 (61 aa).

It belongs to the UPF0434 family.

The protein is UPF0434 protein Bpet2671 of Bordetella petrii (strain ATCC BAA-461 / DSM 12804 / CCUG 43448).